A 165-amino-acid chain; its full sequence is Large ribosomal subunit protein uL11A (165 aa).

Arginine 67 is subject to N5-methylarginine.

Belongs to the universal ribosomal protein uL11 family. As to quaternary structure, component of the large ribosomal subunit (LSU). Mature yeast ribosomes consist of a small (40S) and a large (60S) subunit. The 40S small subunit contains 1 molecule of ribosomal RNA (18S rRNA) and at least 33 different proteins. The large 60S subunit contains 3 rRNA molecules (25S, 5.8S and 5S rRNA) and at least 46 different proteins.

It localises to the cytoplasm. Its subcellular location is the nucleus. The protein resides in the nucleolus. Its function is as follows. This protein binds directly to 26S ribosomal RNA. Component of the ribosome, a large ribonucleoprotein complex responsible for the synthesis of proteins in the cell. The small ribosomal subunit (SSU) binds messenger RNAs (mRNAs) and translates the encoded message by selecting cognate aminoacyl-transfer RNA (tRNA) molecules. The large subunit (LSU) contains the ribosomal catalytic site termed the peptidyl transferase center (PTC), which catalyzes the formation of peptide bonds, thereby polymerizing the amino acids delivered by tRNAs into a polypeptide chain. The nascent polypeptides leave the ribosome through a tunnel in the LSU and interact with protein factors that function in enzymatic processing, targeting, and the membrane insertion of nascent chains at the exit of the ribosomal tunnel. The sequence is that of Large ribosomal subunit protein uL11A (rpl1201) from Schizosaccharomyces pombe (strain 972 / ATCC 24843) (Fission yeast).